Consider the following 258-residue polypeptide: 6-phosphogluconolactonase (258 aa).

Ala-2 carries the N-acetylalanine modification. Phosphoserine is present on Ser-49. Lys-180 is subject to N6-acetyllysine.

The protein belongs to the glucosamine/galactosamine-6-phosphate isomerase family. 6-phosphogluconolactonase subfamily.

The protein localises to the cytoplasm. It carries out the reaction 6-phospho-D-glucono-1,5-lactone + H2O = 6-phospho-D-gluconate + H(+). Its pathway is carbohydrate degradation; pentose phosphate pathway; D-ribulose 5-phosphate from D-glucose 6-phosphate (oxidative stage): step 2/3. Hydrolysis of 6-phosphogluconolactone to 6-phosphogluconate. The sequence is that of 6-phosphogluconolactonase (PGLS) from Bos taurus (Bovine).